Here is a 410-residue protein sequence, read N- to C-terminus: Multifunctional CCA protein (410 aa).

2 residues coordinate ATP: G8 and R11. CTP is bound by residues G8 and R11. E21 and D23 together coordinate Mg(2+). ATP contacts are provided by R91, R137, and R140. CTP is bound by residues R91, R137, and R140. An HD domain is found at 228–329; sequence TGIHVMMALR…LKLFDRLDVW (102 aa).

It belongs to the tRNA nucleotidyltransferase/poly(A) polymerase family. Bacterial CCA-adding enzyme type 1 subfamily. Monomer. Can also form homodimers and oligomers. Mg(2+) serves as cofactor. It depends on Ni(2+) as a cofactor.

The catalysed reaction is a tRNA precursor + 2 CTP + ATP = a tRNA with a 3' CCA end + 3 diphosphate. It carries out the reaction a tRNA with a 3' CCA end + 2 CTP + ATP = a tRNA with a 3' CCACCA end + 3 diphosphate. Functionally, catalyzes the addition and repair of the essential 3'-terminal CCA sequence in tRNAs without using a nucleic acid template. Adds these three nucleotides in the order of C, C, and A to the tRNA nucleotide-73, using CTP and ATP as substrates and producing inorganic pyrophosphate. tRNA 3'-terminal CCA addition is required both for tRNA processing and repair. Also involved in tRNA surveillance by mediating tandem CCA addition to generate a CCACCA at the 3' terminus of unstable tRNAs. While stable tRNAs receive only 3'-terminal CCA, unstable tRNAs are marked with CCACCA and rapidly degraded. The protein is Multifunctional CCA protein of Tolumonas auensis (strain DSM 9187 / NBRC 110442 / TA 4).